The primary structure comprises 161 residues: Cyclic pyranopterin monophosphate synthase (161 aa).

Substrate is bound by residues 76–78 (MCH) and 114–115 (ME). The active site involves aspartate 129.

This sequence belongs to the MoaC family. Homohexamer; trimer of dimers.

It catalyses the reaction (8S)-3',8-cyclo-7,8-dihydroguanosine 5'-triphosphate = cyclic pyranopterin phosphate + diphosphate. Its pathway is cofactor biosynthesis; molybdopterin biosynthesis. Catalyzes the conversion of (8S)-3',8-cyclo-7,8-dihydroguanosine 5'-triphosphate to cyclic pyranopterin monophosphate (cPMP). The protein is Cyclic pyranopterin monophosphate synthase of Clostridium acetobutylicum (strain ATCC 824 / DSM 792 / JCM 1419 / IAM 19013 / LMG 5710 / NBRC 13948 / NRRL B-527 / VKM B-1787 / 2291 / W).